The following is a 207-amino-acid chain: Thiamine-phosphate synthase (207 aa).

Residues Gln36 to Lys40 and Asn68 contribute to the 4-amino-2-methyl-5-(diphosphooxymethyl)pyrimidine site. 2 residues coordinate Mg(2+): Asp69 and Asp88. Ser106 provides a ligand contact to 4-amino-2-methyl-5-(diphosphooxymethyl)pyrimidine. Thr132–Thr134 contacts 2-[(2R,5Z)-2-carboxy-4-methylthiazol-5(2H)-ylidene]ethyl phosphate. 4-amino-2-methyl-5-(diphosphooxymethyl)pyrimidine is bound at residue Lys135. Residues Gly162 and Val182 to Ser183 contribute to the 2-[(2R,5Z)-2-carboxy-4-methylthiazol-5(2H)-ylidene]ethyl phosphate site.

It belongs to the thiamine-phosphate synthase family. It depends on Mg(2+) as a cofactor.

It catalyses the reaction 2-[(2R,5Z)-2-carboxy-4-methylthiazol-5(2H)-ylidene]ethyl phosphate + 4-amino-2-methyl-5-(diphosphooxymethyl)pyrimidine + 2 H(+) = thiamine phosphate + CO2 + diphosphate. The enzyme catalyses 2-(2-carboxy-4-methylthiazol-5-yl)ethyl phosphate + 4-amino-2-methyl-5-(diphosphooxymethyl)pyrimidine + 2 H(+) = thiamine phosphate + CO2 + diphosphate. The catalysed reaction is 4-methyl-5-(2-phosphooxyethyl)-thiazole + 4-amino-2-methyl-5-(diphosphooxymethyl)pyrimidine + H(+) = thiamine phosphate + diphosphate. The protein operates within cofactor biosynthesis; thiamine diphosphate biosynthesis; thiamine phosphate from 4-amino-2-methyl-5-diphosphomethylpyrimidine and 4-methyl-5-(2-phosphoethyl)-thiazole: step 1/1. Functionally, condenses 4-methyl-5-(beta-hydroxyethyl)thiazole monophosphate (THZ-P) and 2-methyl-4-amino-5-hydroxymethyl pyrimidine pyrophosphate (HMP-PP) to form thiamine monophosphate (TMP). In Methanococcus maripaludis (strain DSM 14266 / JCM 13030 / NBRC 101832 / S2 / LL), this protein is Thiamine-phosphate synthase.